Reading from the N-terminus, the 272-residue chain is Alpha-tubulin N-acetyltransferase (272 aa).

One can recognise an N-acetyltransferase domain in the interval 1–186; sequence MEFRFNCHPL…NNFVVYEGFF (186 aa). Residues 120–133 and 156–165 contribute to the acetyl-CoA site; these read FYVH…GLGR and SEKLLGFLQK. The tract at residues 216-244 is disordered; sequence TTVGEQRRSSSQTRQQVVSPPVVQQPPVG. The segment covering 224–244 has biased composition (low complexity); sequence SSSQTRQQVVSPPVVQQPPVG.

This sequence belongs to the acetyltransferase ATAT1 family.

It catalyses the reaction L-lysyl-[alpha-tubulin] + acetyl-CoA = N(6)-acetyl-L-lysyl-[alpha-tubulin] + CoA + H(+). Its function is as follows. Specifically acetylates 'Lys-40' in alpha-tubulin on the lumenal side of microtubules. Promotes microtubule destabilization and accelerates microtubule dynamics; this activity may be independent of acetylation activity. Acetylates alpha-tubulin with a slow enzymatic rate, due to a catalytic site that is not optimized for acetyl transfer. Enters the microtubule through each end and diffuses quickly throughout the lumen of microtubules. Acetylates only long/old microtubules because of its slow acetylation rate since it does not have time to act on dynamically unstable microtubules before the enzyme is released. This is Alpha-tubulin N-acetyltransferase from Aedes aegypti (Yellowfever mosquito).